A 2282-amino-acid chain; its full sequence is Ectopic P granules protein 5 homolog (2282 aa).

The protein belongs to the EPG5 family.

Its function is as follows. Involved in autophagy. The sequence is that of Ectopic P granules protein 5 homolog from Aedes aegypti (Yellowfever mosquito).